Reading from the N-terminus, the 265-residue chain is NAD kinase (265 aa).

D45 functions as the Proton acceptor in the catalytic mechanism. NAD(+) is bound by residues 45-46 (DG), 121-122 (NE), R147, D149, A184, and Q221.

The protein belongs to the NAD kinase family. It depends on a divalent metal cation as a cofactor.

It localises to the cytoplasm. The catalysed reaction is NAD(+) + ATP = ADP + NADP(+) + H(+). Functionally, involved in the regulation of the intracellular balance of NAD and NADP, and is a key enzyme in the biosynthesis of NADP. Catalyzes specifically the phosphorylation on 2'-hydroxyl of the adenosine moiety of NAD to yield NADP. This chain is NAD kinase, found in Leuconostoc citreum (strain KM20).